Here is a 413-residue protein sequence, read N- to C-terminus: uncharacterized protein (413 aa).

This is an uncharacterized protein from Mycobacterium tuberculosis (strain CDC 1551 / Oshkosh).